Reading from the N-terminus, the 540-residue chain is Collagen alpha-1(XXIII) chain (540 aa).

Residues 1 to 26 (MGPGERAGGGGDAGKGNAAGGGGGGR) are compositionally biased toward gly residues. The interval 1 to 28 (MGPGERAGGGGDAGKGNAAGGGGGGRSA) is disordered. Residues 1–34 (MGPGERAGGGGDAGKGNAAGGGGGGRSATTAGSR) are Cytoplasmic-facing. A helical; Signal-anchor for type II membrane protein membrane pass occupies residues 35–56 (AVSALCLLLSVGSAAACLLLGV). Residues 57 to 540 (QAAALQGRVA…GLPVPGCWHK (484 aa)) are Extracellular-facing. 2 disordered regions span residues 109 to 304 (AREA…GEQG) and 316 to 540 (LDAL…CWHK). Collagen-like domains lie at 124–243 (GRRG…PGKK), 251–305 (QPGP…EQGD), 321–380 (GPPG…MGLS), 412–460 (GPPG…GPPG), and 463–522 (GLPG…PGLD). 2 stretches are compositionally biased toward low complexity: residues 140-156 (QSGR…DGKP) and 168-183 (PGDF…DGAA). Residues 185–195 (PPGPPGPPGAR) are compositionally biased toward pro residues. Over residues 322–334 (PPGPQGPPGPPGI) the composition is skewed to pro residues. The segment covering 350–362 (DGEKGPKGQKGDP) has biased composition (basic and acidic residues). Positions 411-422 (PGPPGPPGPPGP) are enriched in pro residues. Composition is skewed to basic and acidic residues over residues 435 to 444 (DGAKGEKGAS) and 486 to 503 (RGEK…ERGV).

As to quaternary structure, homotrimer. Undergoes proteolytic cleavage by furin protease to yield a 60 kDa soluble form that forms a homotrimer and exhibits a low affinity interaction with heparin.

Its subcellular location is the cell membrane. This Homo sapiens (Human) protein is Collagen alpha-1(XXIII) chain (COL23A1).